The chain runs to 310 residues: MEFHHVTVLLKETVDGVVRDPSGTYVDCTLGGAGHSGYVLSRLSEKGKLVGFDQDPLAIKNAQDKFAGDPRVFLVNRNFEGLEESLQSLELLPVQGVLFDLGVSSPQLDEAERGFSYMQDAELDMRMNPQNPLSAKTLVNEGKAEMLAEILWKYGEEKWSKRIVEFIVEARKQKSITTTGELVDIIKRAIPAGARREGPHPAKRTFQALRIAVNDELGVLERALDQVIRCLAPGGRVGVITFHSLEDRIVKETFNSWLGRCTCPPVFPVCQCGARAMARLVHRKPILPSPQEIEANPRARSAKLRIAEKL.

S-adenosyl-L-methionine-binding positions include alanine 33–histidine 35, aspartate 53, phenylalanine 79, aspartate 100, and glutamine 107.

It belongs to the methyltransferase superfamily. RsmH family.

It localises to the cytoplasm. The catalysed reaction is cytidine(1402) in 16S rRNA + S-adenosyl-L-methionine = N(4)-methylcytidine(1402) in 16S rRNA + S-adenosyl-L-homocysteine + H(+). Functionally, specifically methylates the N4 position of cytidine in position 1402 (C1402) of 16S rRNA. The protein is Ribosomal RNA small subunit methyltransferase H of Desulfitobacterium hafniense (strain DSM 10664 / DCB-2).